Reading from the N-terminus, the 444-residue chain is Transmembrane protein with metallophosphoesterase domain (444 aa).

A run of 5 helical transmembrane segments spans residues 7 to 27 (LSLG…MIVS), 43 to 63 (LFRL…SIYI), 87 to 107 (MVVA…IFLV), 114 to 134 (FSLV…FLCV), and 162 to 182 (LALR…VGLL). Positions 214, 216, 246, 277, 382, and 384 each coordinate a divalent metal cation.

The protein belongs to the metallophosphoesterase superfamily. LOC643853 family. The cofactor is a divalent metal cation.

The protein resides in the membrane. In Bos taurus (Bovine), this protein is Transmembrane protein with metallophosphoesterase domain (TMPPE).